Reading from the N-terminus, the 542-residue chain is Phosphoenolpyruvate carboxykinase (ATP) (542 aa).

The substrate site is built by arginine 67, tyrosine 208, and lysine 214. ATP-binding positions include lysine 214, histidine 233, and 249–257 (GLSGTGKTT). Positions 214 and 233 each coordinate Mn(2+). Aspartate 270 serves as a coordination point for Mn(2+). ATP-binding positions include glutamate 298, arginine 334, 450–451 (RI), and threonine 456. Residue arginine 334 coordinates substrate.

This sequence belongs to the phosphoenolpyruvate carboxykinase (ATP) family. In terms of assembly, monomer. Requires Mn(2+) as cofactor.

Its subcellular location is the cytoplasm. It catalyses the reaction oxaloacetate + ATP = phosphoenolpyruvate + ADP + CO2. It participates in carbohydrate biosynthesis; gluconeogenesis. Involved in the gluconeogenesis. Catalyzes the conversion of oxaloacetate (OAA) to phosphoenolpyruvate (PEP) through direct phosphoryl transfer between the nucleoside triphosphate and OAA. The protein is Phosphoenolpyruvate carboxykinase (ATP) of Vibrio vulnificus (strain CMCP6).